The following is a 347-amino-acid chain: Probable dual-specificity RNA methyltransferase RlmN (347 aa).

The active-site Proton acceptor is the Glu-94. The 220-residue stretch at 100–319 (YPSRTIACIS…LDTLVKNGID (220 aa)) folds into the Radical SAM core domain. An intrachain disulfide couples Cys-107 to Cys-334. Residues Cys-114, Cys-118, and Cys-121 each contribute to the [4Fe-4S] cluster site. S-adenosyl-L-methionine-binding positions include 161-162 (GE), Ser-193, 216-218 (SLH), and Asn-292. Cys-334 functions as the S-methylcysteine intermediate in the catalytic mechanism.

This sequence belongs to the radical SAM superfamily. RlmN family. It depends on [4Fe-4S] cluster as a cofactor.

Its subcellular location is the cytoplasm. The catalysed reaction is adenosine(2503) in 23S rRNA + 2 reduced [2Fe-2S]-[ferredoxin] + 2 S-adenosyl-L-methionine = 2-methyladenosine(2503) in 23S rRNA + 5'-deoxyadenosine + L-methionine + 2 oxidized [2Fe-2S]-[ferredoxin] + S-adenosyl-L-homocysteine. It carries out the reaction adenosine(37) in tRNA + 2 reduced [2Fe-2S]-[ferredoxin] + 2 S-adenosyl-L-methionine = 2-methyladenosine(37) in tRNA + 5'-deoxyadenosine + L-methionine + 2 oxidized [2Fe-2S]-[ferredoxin] + S-adenosyl-L-homocysteine. Functionally, specifically methylates position 2 of adenine 2503 in 23S rRNA and position 2 of adenine 37 in tRNAs. This chain is Probable dual-specificity RNA methyltransferase RlmN, found in Petrotoga mobilis (strain DSM 10674 / SJ95).